A 104-amino-acid chain; its full sequence is MNTVFEIVSQARRKNKLKRELLDNEKKVRDNRKRVELLENLLDYIKPNMSQDEIMTIIKNMKADYEDRVDDHIIKSAEISKARRDISRRIRELTEEDKQASGKK.

2 coiled-coil regions span residues 13–43 (RKNKLKRELLDNEKKVRDNRKRVELLENLLD) and 76–96 (SAEISKARRDISRRIRELTEE).

This sequence belongs to the pole-localizer TmaR family.

It is found in the cytoplasm. Pole-localizer protein involved in the regulation of several cellular processes. In Vibrio vulnificus (strain CMCP6), this protein is Pole-localizer protein TmaR.